Reading from the N-terminus, the 689-residue chain is tRNA 5-methylaminomethyl-2-thiouridine biosynthesis bifunctional protein MnmC (689 aa).

Residues 1–245 (MNQRPIQTAT…KREMLTGTLP (245 aa)) are tRNA (mnm(5)s(2)U34)-methyltransferase. An FAD-dependent cmnm(5)s(2)U34 oxidoreductase region spans residues 270 to 689 (IGGGIVSALT…RSPATQESSR (420 aa)).

This sequence in the N-terminal section; belongs to the methyltransferase superfamily. tRNA (mnm(5)s(2)U34)-methyltransferase family. It in the C-terminal section; belongs to the DAO family. The cofactor is FAD.

It localises to the cytoplasm. It carries out the reaction 5-aminomethyl-2-thiouridine(34) in tRNA + S-adenosyl-L-methionine = 5-methylaminomethyl-2-thiouridine(34) in tRNA + S-adenosyl-L-homocysteine + H(+). Its function is as follows. Catalyzes the last two steps in the biosynthesis of 5-methylaminomethyl-2-thiouridine (mnm(5)s(2)U) at the wobble position (U34) in tRNA. Catalyzes the FAD-dependent demodification of cmnm(5)s(2)U34 to nm(5)s(2)U34, followed by the transfer of a methyl group from S-adenosyl-L-methionine to nm(5)s(2)U34, to form mnm(5)s(2)U34. The protein is tRNA 5-methylaminomethyl-2-thiouridine biosynthesis bifunctional protein MnmC of Yersinia pseudotuberculosis serotype I (strain IP32953).